Here is a 301-residue protein sequence, read N- to C-terminus: Probable alpha-L-glutamate ligase (301 aa).

Residues 104–287 (LQLLSRKGVG…VAALVMEFIE (184 aa)) form the ATP-grasp domain. ATP is bound by residues lysine 141, 178 to 179 (EY), aspartate 187, and 211 to 213 (RSN). Aspartate 248, glutamate 260, and asparagine 262 together coordinate Mg(2+). Mn(2+) contacts are provided by aspartate 248, glutamate 260, and asparagine 262.

Belongs to the RimK family. The cofactor is Mg(2+). It depends on Mn(2+) as a cofactor.

This chain is Probable alpha-L-glutamate ligase, found in Saccharophagus degradans (strain 2-40 / ATCC 43961 / DSM 17024).